The following is a 250-amino-acid chain: Solute carrier family 66 member 2 (250 aa).

The PQ-loop 1 domain maps to R14–Q80. 6 helical membrane passes run M15 to P35, F49 to F69, H72 to L92, F118 to V138, L151 to Y173, and F212 to L232. The PQ-loop 2 domain maps to S149–C215.

It is found in the membrane. The sequence is that of Solute carrier family 66 member 2 (slc66a2) from Xenopus laevis (African clawed frog).